Reading from the N-terminus, the 543-residue chain is Putative pectinesterase/pectinesterase inhibitor 22 (543 aa).

An N-terminal signal peptide occupies residues Met1–Ser19. A pectinesterase inhibitor 22 region spans residues Ala38–Met197. Asn211 and Asn263 each carry an N-linked (GlcNAc...) asparagine glycan. Residues Asn240–Arg527 are pectinesterase 22. Thr315 and Gln345 together coordinate substrate. Asp368 serves as the catalytic Proton donor; for pectinesterase activity. A disulfide bond links Cys382 and Cys402. The active-site Nucleophile; for pectinesterase activity is the Asp389. The substrate site is built by Arg448 and Trp450.

This sequence in the N-terminal section; belongs to the PMEI family. It in the C-terminal section; belongs to the pectinesterase family.

It is found in the secreted. Its subcellular location is the cell wall. It catalyses the reaction [(1-&gt;4)-alpha-D-galacturonosyl methyl ester](n) + n H2O = [(1-&gt;4)-alpha-D-galacturonosyl](n) + n methanol + n H(+). The protein operates within glycan metabolism; pectin degradation; 2-dehydro-3-deoxy-D-gluconate from pectin: step 1/5. In terms of biological role, acts in the modification of cell walls via demethylesterification of cell wall pectin. The chain is Putative pectinesterase/pectinesterase inhibitor 22 (PME22) from Arabidopsis thaliana (Mouse-ear cress).